The primary structure comprises 270 residues: Large ribosomal subunit protein uL2c (270 aa).

Residues 221–245 (NPIDHPHGGGEGRAPIGRNQPKTPW) form a disordered region.

Belongs to the universal ribosomal protein uL2 family. In terms of assembly, part of the 50S ribosomal subunit.

It localises to the plastid. This chain is Large ribosomal subunit protein uL2c (rpl2), found in Cuscuta gronovii (Common dodder).